The chain runs to 365 residues: Putative carbonic anhydrase-like protein 1 (365 aa).

The signal sequence occupies residues 1-25; the sequence is MRFECSHFPLFLIILTCHISPLKSS. The 329-residue stretch at 28 to 356 folds into the Alpha-carbonic anhydrase domain; that stretch reads YQWSYDSDVF…TNNRLVRTNI (329 aa). The active site involves Tyr-223. Residues Thr-295 and 295–296 contribute to the substrate site; that span reads TS.

This sequence belongs to the alpha-carbonic anhydrase family.

It is found in the secreted. In Caenorhabditis elegans, this protein is Putative carbonic anhydrase-like protein 1 (cah-1).